The sequence spans 156 residues: Flagellar assembly factor FliW (156 aa).

Belongs to the FliW family. Interacts with translational regulator CsrA and flagellin(s).

The protein localises to the cytoplasm. Acts as an anti-CsrA protein, binds CsrA and prevents it from repressing translation of its target genes, one of which is flagellin. Binds to flagellin and participates in the assembly of the flagellum. The polypeptide is Flagellar assembly factor FliW (Pseudothermotoga lettingae (strain ATCC BAA-301 / DSM 14385 / NBRC 107922 / TMO) (Thermotoga lettingae)).